The sequence spans 286 residues: Pyridoxal kinase PdxY (286 aa).

Substrate-binding positions include Ser9 and 44–45; that span reads TQ. ATP-binding positions include Asp111, Ala143, Glu148, Lys181, and 208–211; that span reads RPLV. Residue Asp223 coordinates substrate.

It belongs to the pyridoxine kinase family. PdxY subfamily. In terms of assembly, homodimer. It depends on Mg(2+) as a cofactor.

The enzyme catalyses pyridoxal + ATP = pyridoxal 5'-phosphate + ADP + H(+). It functions in the pathway cofactor metabolism; pyridoxal 5'-phosphate salvage; pyridoxal 5'-phosphate from pyridoxal: step 1/1. Its function is as follows. Pyridoxal kinase involved in the salvage pathway of pyridoxal 5'-phosphate (PLP). Catalyzes the phosphorylation of pyridoxal to PLP. The polypeptide is Pyridoxal kinase PdxY (Salmonella choleraesuis (strain SC-B67)).